The sequence spans 215 residues: Probable transaldolase (215 aa).

Lys83 functions as the Schiff-base intermediate with substrate in the catalytic mechanism.

This sequence belongs to the transaldolase family. Type 3B subfamily.

The protein resides in the cytoplasm. It carries out the reaction D-sedoheptulose 7-phosphate + D-glyceraldehyde 3-phosphate = D-erythrose 4-phosphate + beta-D-fructose 6-phosphate. It functions in the pathway carbohydrate degradation; pentose phosphate pathway; D-glyceraldehyde 3-phosphate and beta-D-fructose 6-phosphate from D-ribose 5-phosphate and D-xylulose 5-phosphate (non-oxidative stage): step 2/3. Its function is as follows. Transaldolase is important for the balance of metabolites in the pentose-phosphate pathway. The protein is Probable transaldolase (tal) of Clostridium acetobutylicum (strain ATCC 824 / DSM 792 / JCM 1419 / IAM 19013 / LMG 5710 / NBRC 13948 / NRRL B-527 / VKM B-1787 / 2291 / W).